The following is a 227-amino-acid chain: PKHD-type hydroxylase Bpro_3048 (227 aa).

The 102-residue stretch at 78–179 (KIFTPRINRY…RLACFFWVES (102 aa)) folds into the Fe2OG dioxygenase domain. Fe cation-binding residues include histidine 97, aspartate 99, and histidine 160. Arginine 170 is a 2-oxoglutarate binding site.

Requires Fe(2+) as cofactor. L-ascorbate is required as a cofactor.

This chain is PKHD-type hydroxylase Bpro_3048, found in Polaromonas sp. (strain JS666 / ATCC BAA-500).